Consider the following 351-residue polypeptide: L-threonine 3-dehydrogenase (351 aa).

Cys39 lines the Zn(2+) pocket. Active-site charge relay system residues include Thr41 and His44. Zn(2+) is bound by residues His64, Glu65, Cys94, Cys97, Cys100, and Cys108. NAD(+)-binding positions include Ile176, Asp196, Arg201, 271–273 (LGI), and 295–296 (IY).

This sequence belongs to the zinc-containing alcohol dehydrogenase family. Homotetramer. Requires Zn(2+) as cofactor.

Its subcellular location is the cytoplasm. It carries out the reaction L-threonine + NAD(+) = (2S)-2-amino-3-oxobutanoate + NADH + H(+). Its pathway is amino-acid degradation; L-threonine degradation via oxydo-reductase pathway; glycine from L-threonine: step 1/2. Catalyzes the NAD(+)-dependent oxidation of L-threonine to 2-amino-3-ketobutyrate. The polypeptide is L-threonine 3-dehydrogenase (Francisella tularensis subsp. tularensis (strain SCHU S4 / Schu 4)).